The sequence spans 495 residues: Chromosomal replication initiator protein DnaA (495 aa).

Residues 1–91 (MTADPDPPFV…ITALSRHLGQ (91 aa)) are domain I, interacts with DnaA modulators. The domain II stretch occupies residues 91–154 (QRVELGVRIA…TPAAEDPNAV (64 aa)). The segment at 155-371 (SLNRRYTFDT…GALIRVTAFA (217 aa)) is domain III, AAA+ region. Residues Gly-199, Gly-201, Lys-202, and Thr-203 each contribute to the ATP site. The domain IV, binds dsDNA stretch occupies residues 372-495 (SLNKTPIDKS…TTRIRQRAKR (124 aa)).

This sequence belongs to the DnaA family. In terms of assembly, oligomerizes as a right-handed, spiral filament on DNA at oriC.

Its subcellular location is the cytoplasm. Its function is as follows. Plays an essential role in the initiation and regulation of chromosomal replication. ATP-DnaA binds to the origin of replication (oriC) to initiate formation of the DNA replication initiation complex once per cell cycle. Binds the DnaA box (a 9 base pair repeat at the origin) and separates the double-stranded (ds)DNA. Forms a right-handed helical filament on oriC DNA; dsDNA binds to the exterior of the filament while single-stranded (ss)DNA is stabiized in the filament's interior. The ATP-DnaA-oriC complex binds and stabilizes one strand of the AT-rich DNA unwinding element (DUE), permitting loading of DNA polymerase. After initiation quickly degrades to an ADP-DnaA complex that is not apt for DNA replication. Binds acidic phospholipids. The polypeptide is Chromosomal replication initiator protein DnaA (Mycobacterium sp. (strain JLS)).